A 129-amino-acid polypeptide reads, in one-letter code: Type II secretion system protein I (129 aa).

A propeptide spans 1–6 (leader sequence); sequence MKRARG. N-methylphenylalanine is present on Phe-7. A helical transmembrane segment spans residues 7 to 27; the sequence is FTLLEVLVALAIFAMVAASVL.

Belongs to the GSP I family. As to quaternary structure, type II secretion is composed of four main components: the outer membrane complex, the inner membrane complex, the cytoplasmic secretion ATPase and the periplasm-spanning pseudopilus. Forms the tip of the type II pseudopilus by interacting with XcpU, XcpW and XcpX. Interacts with core component XcpT. Post-translationally, cleaved by prepilin peptidase. In terms of processing, methylated by prepilin peptidase at the amino group of the N-terminal phenylalanine once the leader sequence is cleaved by prepilin peptidase.

The protein resides in the cell inner membrane. Functionally, component of the type II secretion system required for the energy-dependent secretion of extracellular factors such as proteases and toxins from the periplasm. Part of the pseudopilus tip complex that is critical for the recognition and binding of secretion substrates. Type II pseudopilus confers increased bacterial adhesive capabilities. This Pseudomonas aeruginosa (strain ATCC 15692 / DSM 22644 / CIP 104116 / JCM 14847 / LMG 12228 / 1C / PRS 101 / PAO1) protein is Type II secretion system protein I (xcpV).